The following is a 299-amino-acid chain: Probable 4-deoxy-4-formamido-L-arabinose-phosphoundecaprenol deformylase ArnD (299 aa).

Residues 2–263 enclose the NodB homology domain; it reads IDVGLRIDVD…EASARGIRFV (262 aa).

This sequence belongs to the polysaccharide deacetylase family. ArnD deformylase subfamily.

The enzyme catalyses 4-deoxy-4-formamido-alpha-L-arabinopyranosyl di-trans,octa-cis-undecaprenyl phosphate + H2O = 4-amino-4-deoxy-alpha-L-arabinopyranosyl di-trans,octa-cis-undecaprenyl phosphate + formate. Its pathway is glycolipid biosynthesis; 4-amino-4-deoxy-alpha-L-arabinose undecaprenyl phosphate biosynthesis; 4-amino-4-deoxy-alpha-L-arabinose undecaprenyl phosphate from UDP-4-deoxy-4-formamido-beta-L-arabinose and undecaprenyl phosphate: step 2/2. The protein operates within bacterial outer membrane biogenesis; lipopolysaccharide biosynthesis. Functionally, catalyzes the deformylation of 4-deoxy-4-formamido-L-arabinose-phosphoundecaprenol to 4-amino-4-deoxy-L-arabinose-phosphoundecaprenol. The modified arabinose is attached to lipid A and is required for resistance to polymyxin and cationic antimicrobial peptides. The chain is Probable 4-deoxy-4-formamido-L-arabinose-phosphoundecaprenol deformylase ArnD from Aeromonas salmonicida (strain A449).